The primary structure comprises 178 residues: ATP-dependent protease subunit HslV (178 aa).

Residue Thr-8 is part of the active site. The Na(+) site is built by Gly-163, Cys-166, and Thr-169.

Belongs to the peptidase T1B family. HslV subfamily. As to quaternary structure, a double ring-shaped homohexamer of HslV is capped on each side by a ring-shaped HslU homohexamer. The assembly of the HslU/HslV complex is dependent on binding of ATP.

The protein resides in the cytoplasm. It carries out the reaction ATP-dependent cleavage of peptide bonds with broad specificity.. With respect to regulation, allosterically activated by HslU binding. Protease subunit of a proteasome-like degradation complex believed to be a general protein degrading machinery. This is ATP-dependent protease subunit HslV from Treponema denticola (strain ATCC 35405 / DSM 14222 / CIP 103919 / JCM 8153 / KCTC 15104).